A 490-amino-acid chain; its full sequence is MRLSDLAAALQLPAPETDPQTDTEVTGVTHNAAWVQPGSAFVAIRGAKFDGHSFMEQAQAAGAVAVLGEGLADGQTSPLPYLTVPNARAALADAAAALAGHPSRELKVVGVTGTDGKTTTSWLTRHLLRSAGLATGLLSTVGYELPDGELRHFPAHFTTPEAPQVQDTLREMVAAGAQATVLEASSHALSLDRVRGVDWDVAVWTHLSSEHLDFHGTLDNYFADKRKLVERARFAVLNVDDPWTAQLRGIAPGETTYSAENQHADWRAQDIEERHSGLHFRVVSPAGDFQAELPMIGRFNVANALAGMAAAHHLGATALQLQAGLASFRGVPGRMELVPGGATSPRVIVDFAHTPPSLEKALGTLRATTAGHLWVVIGSAGGPRDPYKRAPLGEVATRLADHAILTEEDCRDTPLQDILNEMERGAREEGRSNFVSIGDRREAIRYAVTHAQPGDTVLLAGKGPEDTLERATETLPWNEVAEARAVLAER.

113–119 is an ATP binding site; sequence GTDGKTT. Residues 158 to 159, S185, and R193 contribute to the UDP-N-acetyl-alpha-D-muramoyl-L-alanyl-D-glutamate site; that span reads TT. K225 carries the N6-carboxylysine modification.

Belongs to the MurCDEF family. MurE subfamily. Post-translationally, carboxylation is probably crucial for Mg(2+) binding and, consequently, for the gamma-phosphate positioning of ATP.

The protein resides in the cytoplasm. It functions in the pathway cell wall biogenesis; peptidoglycan biosynthesis. Its function is as follows. Catalyzes the addition of an amino acid to the nucleotide precursor UDP-N-acetylmuramoyl-L-alanyl-D-glutamate (UMAG) in the biosynthesis of bacterial cell-wall peptidoglycan. The polypeptide is UDP-N-acetylmuramyl-tripeptide synthetase (Deinococcus radiodurans (strain ATCC 13939 / DSM 20539 / JCM 16871 / CCUG 27074 / LMG 4051 / NBRC 15346 / NCIMB 9279 / VKM B-1422 / R1)).